We begin with the raw amino-acid sequence, 578 residues long: PX domain-containing protein kinase-like protein (578 aa).

A PX domain is found at 14 to 126 (LDDTVPLTAA…KFLDPNNYSA (113 aa)). The Protein kinase domain occupies 88 to 481 (FIAERQKGLQ…LENSEEHSAK (394 aa)). Basic residues-rich tracts occupy residues 437–448 (IHQHRRLTRAQS) and 457–469 (KKRKILARKKSKR). 2 disordered regions span residues 437–548 (IHQH…NGMS) and 559–578 (FQKGTLRKAKTCDHSAPKIG). A compositionally biased stretch (low complexity) spans 483–513 (SNSNNSAGSGASSPLTSPSSPTPPSTSGISA). Residues 514-530 (LPPPPPPPPPPAAPLPP) are compositionally biased toward pro residues. Residues 548–567 (SRGALLSSIQNFQKGTLRKA) enclose the WH2 domain. Residues 568–578 (KTCDHSAPKIG) are compositionally biased toward basic and acidic residues.

It belongs to the protein kinase superfamily. In terms of tissue distribution, widely expressed in all tissues examined except in heart. Isoform 1 is expressed in high levels in the brain, skeletal muscle, spleen and testis. Isoform 7 expression has yet to be demonstrated.

The protein localises to the cytoplasm. It localises to the cell membrane. Functionally, binds to and modulates brain Na,K-ATPase subunits ATP1B1 and ATP1B3 and may thereby participate in the regulation of electrical excitability and synaptic transmission. May not display kinase activity. In Homo sapiens (Human), this protein is PX domain-containing protein kinase-like protein.